The sequence spans 566 residues: 15-cis-phytoene desaturase, chloroplastic/chromoplastic (566 aa).

The transit peptide at 1–86 (MVVFGNVSAA…ASLSASFRSA (86 aa)) directs the protein to the chloroplast and chromoplast. Residues A103, 122–123 (EA), K130, 147–148 (HI), and Y153 each bind FAD. R288 provides a ligand contact to substrate. Residues I330 and D519 each contribute to the FAD site. A527 is a substrate binding site. M529 contributes to the FAD binding site.

Belongs to the carotenoid/retinoid oxidoreductase family. As to quaternary structure, homotetramer. Requires FAD as cofactor.

It localises to the plastid. The protein localises to the chloroplast. The protein resides in the chromoplast. Its subcellular location is the membrane. It carries out the reaction 2 a plastoquinone + 15-cis-phytoene = 9,9',15-tri-cis-zeta-carotene + 2 a plastoquinol. It functions in the pathway carotenoid biosynthesis; lycopene biosynthesis. Its function is as follows. Converts phytoene into zeta-carotene via the intermediary of phytofluene by the symmetrical introduction of two double bonds at the C-11 and C-11' positions of phytoene with a concomitant isomerization of two neighboring double bonds at the C9 and C9' positions from trans to cis. The chain is 15-cis-phytoene desaturase, chloroplastic/chromoplastic (PDS) from Arabidopsis thaliana (Mouse-ear cress).